The primary structure comprises 120 residues: MQRIMLRAKLHRVTVTQADLNYEGSCGIDQDLLDAADMKEFEKIELYNVNNGERFSTYIIKGERGSGEISLNGAAARRAHLGDQLIICTYAPMTDEEIATYKPKVILVNEKNGIKEIKKV.

Ser-25 serves as the catalytic Schiff-base intermediate with substrate; via pyruvic acid. Ser-25 carries the pyruvic acid (Ser) modification. Residue Thr-57 participates in substrate binding. The Proton donor role is filled by Tyr-58. 73–75 (GAA) lines the substrate pocket.

The protein belongs to the PanD family. Heterooctamer of four alpha and four beta subunits. Requires pyruvate as cofactor. Post-translationally, is synthesized initially as an inactive proenzyme, which is activated by self-cleavage at a specific serine bond to produce a beta-subunit with a hydroxyl group at its C-terminus and an alpha-subunit with a pyruvoyl group at its N-terminus.

Its subcellular location is the cytoplasm. It carries out the reaction L-aspartate + H(+) = beta-alanine + CO2. Its pathway is cofactor biosynthesis; (R)-pantothenate biosynthesis; beta-alanine from L-aspartate: step 1/1. Its function is as follows. Catalyzes the pyruvoyl-dependent decarboxylation of aspartate to produce beta-alanine. The protein is Aspartate 1-decarboxylase of Cupriavidus taiwanensis (strain DSM 17343 / BCRC 17206 / CCUG 44338 / CIP 107171 / LMG 19424 / R1) (Ralstonia taiwanensis (strain LMG 19424)).